We begin with the raw amino-acid sequence, 167 residues long: Type IV major pilin protein PilE (167 aa).

The propeptide at 1-7 is leader sequence; the sequence is MNTLQKG. The residue at position 8 (Phe8) is an N-methylphenylalanine. A helical transmembrane segment spans residues 8-28; the sequence is FTLIELMIVIAIVGILAAVAL. Ser70 is a glycosylation site (O-linked (GlcNAc...) serine). An intrachain disulfide couples Cys127 to Cys160.

Belongs to the N-Me-Phe pilin family. In terms of assembly, the pili are polar flexible filaments of about 5.4 nanometers diameter and 2.5 micrometers average length; they consist of only a single polypeptide chain arranged in a helical configuration of five subunits per turn in the assembled pilus.

It localises to the fimbrium. The protein resides in the membrane. Its function is as follows. Major component of the type IV pilus (T4P) that plays a role in cellular adherence, microcolony formation, resistance to neutrophil mediated killing, twitching motility as well as transformation. Mediates the attachment and the formation of bacterial microcolonies on host epithelial cells. Mechanistically, pili retractation induces host NF-kappa-B activation in infected cells, which is temporally associated with the formation of gonococcal microcolonies. This is Type IV major pilin protein PilE (pilE) from Neisseria gonorrhoeae.